The primary structure comprises 280 residues: uncharacterized protein (280 aa).

Disordered regions lie at residues 1-83 (MELK…EEEQ) and 248-280 (IRHREEKDQRDQNQKQKQDDKEQDSYKIEEARL). A compositionally biased stretch (polar residues) spans 12-25 (SAKTDNHTVYQNSP). Composition is skewed to basic and acidic residues over residues 41–71 (KQTRQEKTTSSKGNTRTESRKFADEEKRVDD) and 249–280 (RHREEKDQRDQNQKQKQDDKEQDSYKIEEARL).

It belongs to the chlamydial CPn_0705/CT_671/TC_0042 family.

This is an uncharacterized protein from Chlamydia pneumoniae (Chlamydophila pneumoniae).